Reading from the N-terminus, the 856-residue chain is Leucine--tRNA ligase (856 aa).

Positions 53-63 match the 'HIGH' region motif; sequence PYPSGNLHMGH. The 'KMSKS' region motif lies at 622 to 626; sequence KMSKS. An ATP-binding site is contributed by K625.

The protein belongs to the class-I aminoacyl-tRNA synthetase family.

The protein localises to the cytoplasm. It carries out the reaction tRNA(Leu) + L-leucine + ATP = L-leucyl-tRNA(Leu) + AMP + diphosphate. This chain is Leucine--tRNA ligase, found in Prochlorococcus marinus (strain MIT 9312).